Reading from the N-terminus, the 635-residue chain is UvrABC system protein C (635 aa).

In terms of domain architecture, GIY-YIG spans 20-97; the sequence is ERSGVYRMFD…IKKFQPKFNI (78 aa). The UVR domain maps to 207–242; it reads KELQENLSKKMEELSEQMRFEEAAEIRDRIKALSYV.

Belongs to the UvrC family. Interacts with UvrB in an incision complex.

The protein resides in the cytoplasm. Its function is as follows. The UvrABC repair system catalyzes the recognition and processing of DNA lesions. UvrC both incises the 5' and 3' sides of the lesion. The N-terminal half is responsible for the 3' incision and the C-terminal half is responsible for the 5' incision. This chain is UvrABC system protein C, found in Rickettsia bellii (strain RML369-C).